Consider the following 257-residue polypeptide: Pimeloyl-[acyl-carrier protein] methyl ester esterase (257 aa).

The AB hydrolase-1 domain maps to 16–240 (LVLIHGWGMN…EQASHAPFIS (225 aa)). Residues Trp-22, 82–83 (SL), and 143–147 (FMALQ) contribute to the substrate site. Ser-82 functions as the Nucleophile in the catalytic mechanism. Catalysis depends on residues Asp-207 and His-235. Position 235 (His-235) interacts with substrate.

Belongs to the AB hydrolase superfamily. Carboxylesterase BioH family. In terms of assembly, monomer.

It localises to the cytoplasm. It carries out the reaction 6-carboxyhexanoyl-[ACP] methyl ester + H2O = 6-carboxyhexanoyl-[ACP] + methanol + H(+). It participates in cofactor biosynthesis; biotin biosynthesis. In terms of biological role, the physiological role of BioH is to remove the methyl group introduced by BioC when the pimeloyl moiety is complete. It allows to synthesize pimeloyl-ACP via the fatty acid synthetic pathway through the hydrolysis of the ester bonds of pimeloyl-ACP esters. In Aliivibrio fischeri (strain ATCC 700601 / ES114) (Vibrio fischeri), this protein is Pimeloyl-[acyl-carrier protein] methyl ester esterase.